The chain runs to 287 residues: Bifunctional protein FolD (287 aa).

NADP(+) contacts are provided by residues Gly166–Ser168 and Ile232.

This sequence belongs to the tetrahydrofolate dehydrogenase/cyclohydrolase family. Homodimer.

It carries out the reaction (6R)-5,10-methylene-5,6,7,8-tetrahydrofolate + NADP(+) = (6R)-5,10-methenyltetrahydrofolate + NADPH. The catalysed reaction is (6R)-5,10-methenyltetrahydrofolate + H2O = (6R)-10-formyltetrahydrofolate + H(+). It participates in one-carbon metabolism; tetrahydrofolate interconversion. Its function is as follows. Catalyzes the oxidation of 5,10-methylenetetrahydrofolate to 5,10-methenyltetrahydrofolate and then the hydrolysis of 5,10-methenyltetrahydrofolate to 10-formyltetrahydrofolate. The protein is Bifunctional protein FolD of Buchnera aphidicola subsp. Baizongia pistaciae (strain Bp).